A 517-amino-acid polypeptide reads, in one-letter code: Maturase K (517 aa).

This sequence belongs to the intron maturase 2 family. MatK subfamily.

The protein resides in the plastid. The protein localises to the chloroplast. Its function is as follows. Usually encoded in the trnK tRNA gene intron. Probably assists in splicing its own and other chloroplast group II introns. The sequence is that of Maturase K from Palhinhaea cernua (Nodding clubmoss).